A 654-amino-acid polypeptide reads, in one-letter code: ATP-dependent rRNA helicase spb-4 (654 aa).

A Q motif motif is present at residues 17 to 45 (WDALTPPLAQWILDYLSSMGFTQPTPVQK). A Helicase ATP-binding domain is found at 48-249 (LELFRGNKDV…TVGLLYPHKI (202 aa)). 61 to 68 (AVTGSGKT) lines the ATP pocket. Residues 197-200 (DEAD) carry the DEAD box motif. Residues 286–444 (AIVQLLEKLE…VTPDEVERVS (159 aa)) enclose the Helicase C-terminal domain. The stretch at 531 to 631 (REKKRQEELA…EERAAALAAN (101 aa)) forms a coiled coil. A compositionally biased stretch (basic and acidic residues) spans 542 to 577 (WKEEKAKRAQEENTGDKRKKNEAWSGKAEQEETKLQ). Positions 542–654 (WKEEKAKRAQ…SDEEFGGFDD (113 aa)) are disordered. Positions 578–588 (RREKKRRKREA) are enriched in basic residues. The span at 589-625 (KKFSEMTEKEKEEHLKLEQMIEEVRKRNEAKAAEERA) shows a compositional bias: basic and acidic residues. The segment covering 644–654 (DSDEEFGGFDD) has biased composition (acidic residues).

Belongs to the DEAD box helicase family. DDX55/SPB4 subfamily. In terms of assembly, component of pre-60S ribosomal complexes.

The protein localises to the nucleus. Its subcellular location is the nucleolus. The catalysed reaction is ATP + H2O = ADP + phosphate + H(+). Its function is as follows. ATP-binding RNA helicase involved in the biogenesis of 60S ribosomal subunits. Binds 90S pre-ribosomal particles and dissociates from pre-60S ribosomal particles after processing of 27SB pre-rRNA. Required for the normal formation of 18S rRNA through the processing of pre-rRNAs at sites A0, A1 and A2, and the normal formation of 25S and 5.8S rRNAs through the processing of pre-rRNAs at sites C1 and C2. The polypeptide is ATP-dependent rRNA helicase spb-4 (Neurospora crassa (strain ATCC 24698 / 74-OR23-1A / CBS 708.71 / DSM 1257 / FGSC 987)).